The sequence spans 194 residues: Imidazoleglycerol-phosphate dehydratase (194 aa).

It belongs to the imidazoleglycerol-phosphate dehydratase family.

It is found in the cytoplasm. The enzyme catalyses D-erythro-1-(imidazol-4-yl)glycerol 3-phosphate = 3-(imidazol-4-yl)-2-oxopropyl phosphate + H2O. It participates in amino-acid biosynthesis; L-histidine biosynthesis; L-histidine from 5-phospho-alpha-D-ribose 1-diphosphate: step 6/9. This is Imidazoleglycerol-phosphate dehydratase from Sulfurisphaera tokodaii (strain DSM 16993 / JCM 10545 / NBRC 100140 / 7) (Sulfolobus tokodaii).